The chain runs to 435 residues: 3-phosphoshikimate 1-carboxyvinyltransferase (435 aa).

3 residues coordinate 3-phosphoshikimate: K15, S16, and R20. K15 is a phosphoenolpyruvate binding site. Phosphoenolpyruvate contacts are provided by G96 and R124. The 3-phosphoshikimate site is built by S169, Q171, S195, D319, and K346. Q171 contributes to the phosphoenolpyruvate binding site. Residue D319 is the Proton acceptor of the active site. 2 residues coordinate phosphoenolpyruvate: R350 and R395.

This sequence belongs to the EPSP synthase family. In terms of assembly, monomer.

Its subcellular location is the cytoplasm. It carries out the reaction 3-phosphoshikimate + phosphoenolpyruvate = 5-O-(1-carboxyvinyl)-3-phosphoshikimate + phosphate. Its pathway is metabolic intermediate biosynthesis; chorismate biosynthesis; chorismate from D-erythrose 4-phosphate and phosphoenolpyruvate: step 6/7. Its function is as follows. Catalyzes the transfer of the enolpyruvyl moiety of phosphoenolpyruvate (PEP) to the 5-hydroxyl of shikimate-3-phosphate (S3P) to produce enolpyruvyl shikimate-3-phosphate and inorganic phosphate. In Chlorobium phaeobacteroides (strain BS1), this protein is 3-phosphoshikimate 1-carboxyvinyltransferase.